The chain runs to 267 residues: Flap endonuclease Xni (267 aa).

Residue D115 coordinates Mg(2+). The 5'-3' exonuclease domain maps to 171–261 (VAPAQLVDFW…LGFNLREIRY (91 aa)). K(+) is bound by residues L182, V193, and I196. The segment at 195-200 (GIGPKT) is interaction with DNA.

It belongs to the Xni family. Mg(2+) is required as a cofactor. It depends on K(+) as a cofactor.

Functionally, has flap endonuclease activity. During DNA replication, flap endonucleases cleave the 5'-overhanging flap structure that is generated by displacement synthesis when DNA polymerase encounters the 5'-end of a downstream Okazaki fragment. The polypeptide is Flap endonuclease Xni (Aeromonas hydrophila subsp. hydrophila (strain ATCC 7966 / DSM 30187 / BCRC 13018 / CCUG 14551 / JCM 1027 / KCTC 2358 / NCIMB 9240 / NCTC 8049)).